A 163-amino-acid polypeptide reads, in one-letter code: uncharacterized protein (163 aa).

A disordered region spans residues 30–163; that stretch reads GNENTSVSSD…IYKKLGKKKR (134 aa). A compositionally biased stretch (basic and acidic residues) spans 88 to 118; sequence ERQLQKKKEAEKIEGGKNHDNLKRKLNKVGD. Residues 119 to 133 show a composition bias toward acidic residues; the sequence is ELNEQQSDTDDDDDD. Position 125 is a phosphoserine (serine 125). Threonine 127 carries the post-translational modification Phosphothreonine.

The protein localises to the nucleus. The protein resides in the nucleolus. This is an uncharacterized protein from Schizosaccharomyces pombe (strain 972 / ATCC 24843) (Fission yeast).